A 175-amino-acid chain; its full sequence is Auxin-responsive protein IAA28 (175 aa).

Positions 1–39 (MEEEKRLELRLAPPCHQFTSNNNINGSKQKSSTKETSFL) are disordered. An EAR-like (transcriptional repression) motif is present at residues 7–11 (LELRL). Residues 17–39 (QFTSNNNINGSKQKSSTKETSFL) are compositionally biased toward polar residues. Residues 80–161 (ELYVKINMEG…TVKRLHVLKT (82 aa)) form the PB1 domain.

Belongs to the Aux/IAA family. Homodimers and heterodimers. Interacts with TPL. As to expression, in roots and inflorescence stems.

The protein localises to the nucleus. Functionally, aux/IAA proteins are short-lived transcriptional factors that function as repressors of early auxin response genes at low auxin concentrations. Repression is thought to result from the interaction with auxin response factors (ARFs), proteins that bind to the auxin-responsive promoter element (AuxRE). Formation of heterodimers with ARF proteins may alter their ability to modulate early auxin response genes expression. The sequence is that of Auxin-responsive protein IAA28 (IAA28) from Arabidopsis thaliana (Mouse-ear cress).